A 358-amino-acid chain; its full sequence is Tripartite motif-containing protein 54 (358 aa).

The RING-type zinc finger occupies 26-82; sequence CPICLEMFSKPVVILPCQHNLCRKCANDVFQASNPLWQSRGSTTVSSGGRFRCPSCR. The B box-type zinc-finger motif lies at 121–163; it reads EQHLMCEEHEEEKINIYCLSCEVPTCSLCKVFGAHKDCEVAPL. Residues Cys126, His129, Cys149, and His155 each coordinate Zn(2+). The interval 168-211 is mediates microtubule-binding and homooligomerization; sequence KRQKSELSDGIAMLVAGNDRVQAVITQMEEVCQTIEDNSRRQKQ. Residues 194 to 258 adopt a coiled-coil conformation; it reads QMEEVCQTIE…LIRQYGDHLE (65 aa). In terms of domain architecture, COS spans 271–329; that stretch reads MEEPQMALYLQQAKELINKVGAMSKVELAGRPEPGYESMEQFTVSVEHVAEMLRTIDFQ. Residues 326-358 are disordered; it reads IDFQPGASGEEEEVAPDGDEGSAGQEEERPDGP. Residues 334 to 345 show a composition bias toward acidic residues; the sequence is GEEEEVAPDGDE.

Homooligomer and heterooligomer. Interacts with TRIM63 and probably with TRIM55. Interacts with tubulin.

It localises to the cytoplasm. Its subcellular location is the cytoskeleton. The protein resides in the myofibril. It is found in the sarcomere. The protein localises to the z line. In terms of biological role, may bind and stabilize microtubules during myotubes formation. The chain is Tripartite motif-containing protein 54 (TRIM54) from Pongo abelii (Sumatran orangutan).